A 914-amino-acid chain; its full sequence is UPF0182 protein Syncc9605_1323 (914 aa).

The next 9 helical transmembrane spans lie at Leu4–Phe24, Trp37–Trp57, Ile81–Leu101, Arg123–Leu143, Ile152–Leu172, Phe195–Phe215, Met240–Leu260, Leu285–Pro305, and Gln312–Thr332.

Belongs to the UPF0182 family.

It localises to the cell membrane. The chain is UPF0182 protein Syncc9605_1323 from Synechococcus sp. (strain CC9605).